We begin with the raw amino-acid sequence, 193 residues long: uncharacterized protein (193 aa).

3 disordered regions span residues 1-21, 53-96, and 114-136; these read MPKG…APPL, GAPA…PWPS, and SGPE…ASAS. Positions 53 to 70 are enriched in low complexity; the sequence is GAPAGGAPAAGGRSLPQG. Over residues 71 to 95 the composition is skewed to pro residues; it reads PSAPAPPPPPGLGPPSERPCPPPWP. Low complexity predominate over residues 116–127; it reads PEAAASPLAPGP.

This is an uncharacterized protein from Bos taurus (Bovine).